The chain runs to 517 residues: Ribose import ATP-binding protein RbsA 2 (517 aa).

ABC transporter domains lie at 10–245 and 255–498; these read LRIE…GRSI and DAGE…VSTH. 42-49 lines the ATP pocket; sequence GENGAGKS. Residues 497–517 form a disordered region; the sequence is THTGNSPHSGGTDGTEASRGH.

Belongs to the ABC transporter superfamily. Ribose importer (TC 3.A.1.2.1) family. The complex is composed of an ATP-binding protein (RbsA), two transmembrane proteins (RbsC) and a solute-binding protein (RbsB).

The protein resides in the cell membrane. The enzyme catalyses D-ribose(out) + ATP + H2O = D-ribose(in) + ADP + phosphate + H(+). Its function is as follows. Part of the ABC transporter complex RbsABC involved in ribose import. Responsible for energy coupling to the transport system. The sequence is that of Ribose import ATP-binding protein RbsA 2 from Streptomyces coelicolor (strain ATCC BAA-471 / A3(2) / M145).